Consider the following 833-residue polypeptide: P protein (833 aa).

Topologically, residues 1–172 are cytoplasmic; it reads MRLENKDIRL…QVSKLGCCVR (172 aa). Residues 173–193 traverse the membrane as a helical segment; that stretch reads WIKITGLFVFVVLCSILFSLY. Over 194-325 the chain is Extracellular; that stretch reads PDQGKFWQLL…QFLGASVEAQ (132 aa). N-linked (GlcNAc...) asparagine glycosylation is found at Asn210, Asn214, and Asn269. A helical transmembrane segment spans residues 326-346; sequence VASAVAILAGVYTLIIFEIVH. Over 347 to 348 the chain is Cytoplasmic; that stretch reads RT. Residues 349 to 369 traverse the membrane as a helical segment; that stretch reads LAAMLGALAALAALAVVGDRP. Over 370 to 381 the chain is Extracellular; that stretch reads SLTHVVEWIDFE. Residues 382–402 form a helical membrane-spanning segment; that stretch reads TLALLFGMMILVAVFSETGFF. The Cytoplasmic segment spans residues 403–417; that stretch reads DYCAVKAYQLSRGRV. Residues 418–438 traverse the membrane as a helical segment; the sequence is WAMIFMLCLMAAILSAFLDNV. Topologically, residues 439–501 are extracellular; the sequence is TTMLLFTPVT…ELRKMGLDFA (63 aa). The helical transmembrane segment at 502–522 threads the bilayer; sequence GFTAHMFLGICLVLLVSFPLL. Topologically, residues 523-617 are cytoplasmic; sequence RLLYWNKKLY…RKHRISDRSL (95 aa). The chain crosses the membrane as a helical span at residues 618–638; the sequence is LVKCLTVLGFVISMFFLNSFV. A topological domain (extracellular) is located at residue Pro639. A helical membrane pass occupies residues 640–660; that stretch reads GIHLDLGWIAILGAIWLLILA. The Cytoplasmic segment spans residues 661–675; the sequence is DIHDFEIILHRVEWA. Residues 676–696 form a helical membrane-spanning segment; it reads TLLFFAALFVLMEALTHLHLV. Over 697-718 the chain is Extracellular; the sequence is EYVGEQTALLIKMVPEDQRFAA. Residues 719–739 traverse the membrane as a helical segment; it reads AIVLIVWVSALASSLIDNIPF. Over 740–759 the chain is Cytoplasmic; it reads TATMIPVLLNLSQDPEISLP. The chain crosses the membrane as a helical span at residues 760–780; sequence ALPLMYALALGACLGGNGTLI. Over 781–810 the chain is Extracellular; sequence GASTNVVCAGIAEKHGYGFSFMEFFRLGFP. A helical transmembrane segment spans residues 811–831; it reads VMLMSCTIGMCYLLIAHIVVG. Residues 832–833 are Cytoplasmic-facing; it reads WN.

It belongs to the CitM (TC 2.A.11) transporter family. As to expression, most abundant in melanocytes. Also present in neonatal and adult eye tissue presumably as a result of expression in the retinal pigmented epithelium and choroid body, known sites of melanogenesis in the eye. Small but detectable amounts also observed in fetal, neonatal and adult brain. Moderate amounts detected in adult testis and ovary. Not detected in heart, kidney, spleen, liver or thymus.

It localises to the melanosome membrane. It carries out the reaction chloride(in) = chloride(out). Its function is as follows. Contributes to a melanosome-specific anion (chloride) current that modulates melanosomal pH for optimal tyrosinase activity required for melanogenesis and the melanosome maturation. One of the components of the mammalian pigmentary system. May serve as a key control point at which color variation is determined. Major determinant of eye color. Seems to regulate the post-translational processing of tyrosinase, which catalyzes the limiting reaction in melanin synthesis. The polypeptide is P protein (Oca2) (Mus musculus (Mouse)).